A 360-amino-acid chain; its full sequence is Aminomethyltransferase (360 aa).

The protein belongs to the GcvT family. As to quaternary structure, the glycine cleavage system is composed of four proteins: P, T, L and H.

The enzyme catalyses N(6)-[(R)-S(8)-aminomethyldihydrolipoyl]-L-lysyl-[protein] + (6S)-5,6,7,8-tetrahydrofolate = N(6)-[(R)-dihydrolipoyl]-L-lysyl-[protein] + (6R)-5,10-methylene-5,6,7,8-tetrahydrofolate + NH4(+). Its function is as follows. The glycine cleavage system catalyzes the degradation of glycine. This chain is Aminomethyltransferase, found in Pseudomonas syringae pv. tomato (strain ATCC BAA-871 / DC3000).